Reading from the N-terminus, the 218-residue chain is MNNLSYLTKIPLIWVLLSVTLLSACSVAPPENFIPVQVDDVSNAQAWEMQGKLAVRTSKDKFSTNLYWFHTDKKNELTLTTMLGTTVLSLTTLEGEARLEVDGKVYQDKDAQRLLTRVTGWSIPVDALPLWITGRLSDDDELLVQDEQQRPMKLATQNPPPWEVEFISWQQQSGAELPRLLQLKREDLRLKIQISHWQALSAAHLLPSNQPEERLNEQ.

The signal sequence occupies residues 1 to 24 (MNNLSYLTKIPLIWVLLSVTLLSA). Residue Cys-25 is the site of N-palmitoyl cysteine attachment. Cys-25 carries the S-diacylglycerol cysteine lipid modification.

The protein belongs to the LolB family. As to quaternary structure, monomer.

It localises to the cell outer membrane. Its function is as follows. Plays a critical role in the incorporation of lipoproteins in the outer membrane after they are released by the LolA protein. In Shewanella sediminis (strain HAW-EB3), this protein is Outer-membrane lipoprotein LolB.